Reading from the N-terminus, the 177-residue chain is ATP synthase subunit delta (177 aa).

The protein belongs to the ATPase delta chain family. As to quaternary structure, F-type ATPases have 2 components, F(1) - the catalytic core - and F(0) - the membrane proton channel. F(1) has five subunits: alpha(3), beta(3), gamma(1), delta(1), epsilon(1). F(0) has three main subunits: a(1), b(2) and c(10-14). The alpha and beta chains form an alternating ring which encloses part of the gamma chain. F(1) is attached to F(0) by a central stalk formed by the gamma and epsilon chains, while a peripheral stalk is formed by the delta and b chains.

Its subcellular location is the cell membrane. F(1)F(0) ATP synthase produces ATP from ADP in the presence of a proton or sodium gradient. F-type ATPases consist of two structural domains, F(1) containing the extramembraneous catalytic core and F(0) containing the membrane proton channel, linked together by a central stalk and a peripheral stalk. During catalysis, ATP synthesis in the catalytic domain of F(1) is coupled via a rotary mechanism of the central stalk subunits to proton translocation. Its function is as follows. This protein is part of the stalk that links CF(0) to CF(1). It either transmits conformational changes from CF(0) to CF(1) or is implicated in proton conduction. In Buchnera aphidicola subsp. Acyrthosiphon pisum (strain 5A), this protein is ATP synthase subunit delta.